The chain runs to 83 residues: RNA-binding protein Hfq (83 aa).

One can recognise a Sm domain in the interval Asp-10 to Val-69.

This sequence belongs to the Hfq family. Homohexamer.

In terms of biological role, RNA chaperone that binds small regulatory RNA (sRNAs) and mRNAs to facilitate mRNA translational regulation in response to envelope stress, environmental stress and changes in metabolite concentrations. Also binds with high specificity to tRNAs. The protein is RNA-binding protein Hfq of Paracidovorax citrulli (strain AAC00-1) (Acidovorax citrulli).